The chain runs to 122 residues: Probable non-specific lipid-transfer protein 3 (122 aa).

Residues 1–29 form the signal peptide; that stretch reads MARLNSKAVAAAVVLAAVVLMMAGREASA. Cystine bridges form between Cys33-Cys81, Cys43-Cys58, Cys59-Cys104, and Cys79-Cys118.

It belongs to the plant LTP family. As to expression, expressed in phloem. Also detected in the epidermis near the vascular tissues in resistant plants infected by Hessian fly larvae.

Its function is as follows. Plant non-specific lipid-transfer proteins transfer phospholipids as well as galactolipids across membranes. May play a role in wax or cutin deposition in the cell walls of expanding epidermal cells and certain secretory tissues. The protein is Probable non-specific lipid-transfer protein 3 (LTP3) of Triticum aestivum (Wheat).